The primary structure comprises 221 residues: Guanylate kinase (221 aa).

Positions 20–199 constitute a Guanylate kinase-like domain; it reads GLMFILSSPS…CFGKVREILA (180 aa). Position 27–34 (27–34) interacts with ATP; it reads SPSGAGKT.

The protein belongs to the guanylate kinase family.

It is found in the cytoplasm. It carries out the reaction GMP + ATP = GDP + ADP. In terms of biological role, essential for recycling GMP and indirectly, cGMP. The protein is Guanylate kinase of Novosphingobium aromaticivorans (strain ATCC 700278 / DSM 12444 / CCUG 56034 / CIP 105152 / NBRC 16084 / F199).